Here is a 33-residue protein sequence, read N- to C-terminus: Mu-theraphotoxin-Tp1a (33 aa).

Intrachain disulfides connect cysteine 2/cysteine 17, cysteine 9/cysteine 22, and cysteine 16/cysteine 29. Isoleucine 33 is subject to Isoleucine amide.

It belongs to the neurotoxin 10 (Hwtx-1) family. 55 (ProTx-III) subfamily. As to expression, expressed by the venom gland.

The protein localises to the secreted. Inhibits voltage-gated sodium channels without significantly altering the voltage dependence of activation or inactivation. Preferentially inhibits human Nav1.7/SCN9A (IC(50)=2.1 nM) &gt; human Nav1.6/SCN8A &gt; human Nav1.2/SCN2A &gt; human Nav1.1/SCN1A &gt; human Nav1.3/SCN3A channels. Exhibits analgesic properties by reversing spontaneous pain induced in mice by intraplantar injection with OD1 (AC P84646), a scorpion toxin that potentiates human Nav1.7/SCN9A. This chain is Mu-theraphotoxin-Tp1a, found in Thrixopelma pruriens (Peruvian green velvet tarantula).